Consider the following 274-residue polypeptide: MGIKFLNPVTPSSRGTVLVSKIGLSRGKPEKSLAFGKKSSGGRNNNGRITIRHKGGGHKKKYRIIDFKRNRNDQGVVEKIEYDPNRSGFLALVSYKCDDTKSYILAPQGIKPGDIVMSGSGIDILPGNCLPLKGIPIGSFVHGVELKPGSGAVIARAAGCYAQVVGRDGNYVLLRLRSGQVRLVLSSCKATIGVVSNPDRKNRKLGKAGRSRWLGVRPTVRGVAMNPVDHPHGGGEGKTSGGRHPVTPWGVATKGKKTRKKNKFSDKYIKQLKG.

2 disordered regions span residues Glu-30–Lys-54 and Val-223–Gly-274. The segment covering Gly-36–Arg-48 has biased composition (low complexity). Basic and acidic residues predominate over residues Lys-263 to Gly-274.

The protein belongs to the universal ribosomal protein uL2 family. In terms of assembly, part of the 50S ribosomal subunit. Forms a bridge to the 30S subunit in the 70S ribosome.

In terms of biological role, one of the primary rRNA binding proteins. Required for association of the 30S and 50S subunits to form the 70S ribosome, for tRNA binding and peptide bond formation. It has been suggested to have peptidyltransferase activity; this is somewhat controversial. Makes several contacts with the 16S rRNA in the 70S ribosome. This Wolbachia sp. subsp. Brugia malayi (strain TRS) protein is Large ribosomal subunit protein uL2.